The sequence spans 132 residues: Small ribosomal subunit protein uS8 (132 aa).

Belongs to the universal ribosomal protein uS8 family. In terms of assembly, part of the 30S ribosomal subunit. Contacts proteins S5 and S12.

In terms of biological role, one of the primary rRNA binding proteins, it binds directly to 16S rRNA central domain where it helps coordinate assembly of the platform of the 30S subunit. This Streptococcus suis (strain 98HAH33) protein is Small ribosomal subunit protein uS8.